Consider the following 348-residue polypeptide: Probable mitochondrial adenine nucleotide transporter BTL1 (348 aa).

Solcar repeat units follow at residues 46-129, 157-241, and 251-338; these read SREA…VKRA, SWIS…MKTS, and LSRP…WKDI. 6 helical membrane passes run 52–72, 104–124, 156–176, 213–233, 256–276, and 321–341; these read FLSG…LETI, GNEI…GTFE, ISWI…STLV, FYAG…CYYF, MLVL…PLEV, and VMPS…ILLA.

It belongs to the mitochondrial carrier (TC 2.A.29) family.

It localises to the mitochondrion inner membrane. Its function is as follows. Probable mitochondrial adenylate carrier that catalyzes the transport of ATP, ADP and AMP. The polypeptide is Probable mitochondrial adenine nucleotide transporter BTL1 (Arabidopsis thaliana (Mouse-ear cress)).